The following is an 88-amino-acid chain: Small ribosomal subunit protein bS20 (88 aa).

The protein belongs to the bacterial ribosomal protein bS20 family.

Functionally, binds directly to 16S ribosomal RNA. The protein is Small ribosomal subunit protein bS20 of Maricaulis maris (strain MCS10) (Caulobacter maris).